The sequence spans 256 residues: Thiazole synthase (256 aa).

Residue Lys-95 is the Schiff-base intermediate with DXP of the active site. 1-deoxy-D-xylulose 5-phosphate is bound by residues Gly-156, 182–183 (AG), and 204–205 (NT).

It belongs to the ThiG family. Homotetramer. Forms heterodimers with either ThiH or ThiS.

The protein resides in the cytoplasm. The catalysed reaction is [ThiS sulfur-carrier protein]-C-terminal-Gly-aminoethanethioate + 2-iminoacetate + 1-deoxy-D-xylulose 5-phosphate = [ThiS sulfur-carrier protein]-C-terminal Gly-Gly + 2-[(2R,5Z)-2-carboxy-4-methylthiazol-5(2H)-ylidene]ethyl phosphate + 2 H2O + H(+). It functions in the pathway cofactor biosynthesis; thiamine diphosphate biosynthesis. Catalyzes the rearrangement of 1-deoxy-D-xylulose 5-phosphate (DXP) to produce the thiazole phosphate moiety of thiamine. Sulfur is provided by the thiocarboxylate moiety of the carrier protein ThiS. In vitro, sulfur can be provided by H(2)S. The sequence is that of Thiazole synthase from Escherichia coli O6:H1 (strain CFT073 / ATCC 700928 / UPEC).